A 168-amino-acid chain; its full sequence is Mitochondrial inner membrane protein SHH4 (168 aa).

The N-terminal 23 residues, 1-23 (MSSTKFLKPLCRIRAFHTSIARS), are a transit peptide targeting the mitochondrion. Residues 24–65 (FTIPFLPKIPQKPGGVSGTANDSSYMPPESRAQGSYHWIVER) lie on the Mitochondrial matrix side of the membrane. A helical transmembrane segment spans residues 66 to 86 (GLSLAVLPLIAVPLVTTGPIS). Over 87–92 (TFTDTF) the chain is Mitochondrial intermembrane. The chain crosses the membrane as a helical span at residues 93-113 (LSLVLLGHCHIGFQSCIIDYI). Cysteine 101 serves as a coordination point for heme. Position 112 (tyrosine 112) interacts with a ubiquinone. Residues 114 to 120 (SERVYGK) lie on the Mitochondrial matrix side of the membrane. The chain crosses the membrane as a helical span at residues 121 to 141 (VHHYAMYLLSLGSFLSFVGIY). Residues 142-168 (KLESQEAGLIASLKSLWDNKPVEKKRQ) are Mitochondrial intermembrane-facing.

This sequence belongs to the CybS family. As to quaternary structure, interacts with SDH3.

The protein resides in the mitochondrion inner membrane. Functionally, homolog of SDH4, but seems not to be a stoichiometric subunit of either the succinate dehydrogenase (SDH) complex or the mitochondrial inner membrane translocase TIM22 complex. The chain is Mitochondrial inner membrane protein SHH4 from Saccharomyces cerevisiae (strain ATCC 204508 / S288c) (Baker's yeast).